The chain runs to 379 residues: Cytochrome b (379 aa).

4 consecutive transmembrane segments (helical) span residues 32-52, 76-98, 111-131, and 177-197; these read YGSL…VLAT, WLLR…LHIG, VWNI…LGYV, and FFAL…LHIF. Positions 82 and 96 each coordinate heme b. Positions 181 and 195 each coordinate heme b. An a ubiquinone-binding site is contributed by His-200. The next 4 helical transmembrane spans lie at 223–243, 287–304, 320–340, and 348–367; these read YSVK…VFTL, LGGV…FLFS, LARL…WLGS, and NEVA…TMCA.

The protein belongs to the cytochrome b family. In terms of assembly, the main subunits of complex b-c1 are: cytochrome b, cytochrome c1 and the Rieske protein. It depends on heme b as a cofactor.

The protein resides in the mitochondrion inner membrane. Its function is as follows. Component of the ubiquinol-cytochrome c reductase complex (complex III or cytochrome b-c1 complex) that is part of the mitochondrial respiratory chain. The b-c1 complex mediates electron transfer from ubiquinol to cytochrome c. Contributes to the generation of a proton gradient across the mitochondrial membrane that is then used for ATP synthesis. The polypeptide is Cytochrome b (mt:Cyt-b) (Brachionus plicatilis (Marine rotifer)).